A 345-amino-acid chain; its full sequence is NADPH dehydrogenase (345 aa).

S23–C26 provides a ligand contact to FMN. Y28 is a substrate binding site. FMN is bound by residues A60 and Q102. H164 to H167 lines the substrate pocket. Residues R215 and G307–R308 each bind FMN.

The protein belongs to the NADH:flavin oxidoreductase/NADH oxidase family. NamA subfamily. As to quaternary structure, homotetramer. Requires FMN as cofactor.

The catalysed reaction is A + NADPH + H(+) = AH2 + NADP(+). Functionally, catalyzes the reduction of the double bond of an array of alpha,beta-unsaturated aldehydes and ketones. It also reduces the nitro group of nitroester and nitroaromatic compounds. It could have a role in detoxification processes. The chain is NADPH dehydrogenase from Bacillus cereus (strain B4264).